The sequence spans 249 residues: DNA polymerase sliding clamp (249 aa).

Belongs to the PCNA family. In terms of assembly, homotrimer. The subunits circularize to form a toroid; DNA passes through its center. Replication factor C (RFC) is required to load the toroid on the DNA.

Sliding clamp subunit that acts as a moving platform for DNA processing. Responsible for tethering the catalytic subunit of DNA polymerase and other proteins to DNA during high-speed replication. The sequence is that of DNA polymerase sliding clamp from Methanococcus vannielii (strain ATCC 35089 / DSM 1224 / JCM 13029 / OCM 148 / SB).